Here is a 59-residue protein sequence, read N- to C-terminus: Large ribosomal subunit protein bL32 (59 aa).

The interval 1–59 (MAVQQNKKSPSKRGMHRSHDHLSAAPLAVEPTTGETHLRHHVSPNGYYRGRKVIKTKND) is disordered. Basic residues-rich tracts occupy residues 9-19 (SPSKRGMHRSH) and 49-59 (RGRKVIKTKND).

This sequence belongs to the bacterial ribosomal protein bL32 family.

This chain is Large ribosomal subunit protein bL32, found in Cupriavidus necator (strain ATCC 17699 / DSM 428 / KCTC 22496 / NCIMB 10442 / H16 / Stanier 337) (Ralstonia eutropha).